A 414-amino-acid polypeptide reads, in one-letter code: tRNA (guanine-N(7)-)-methyltransferase non-catalytic subunit WDR4 (414 aa).

N-acetylalanine is present on alanine 2. 4 WD repeats span residues 60-99, 101-140, 144-184, and 187-227; these read QGSD…CLSV, TVVR…GGGR, GHLS…IESF, and GHTE…ELHC. The tract at residues 377-414 is disordered; the sequence is EERLQQQLEKKRRQAPPPGPNGPTKKMRAGELAQGCSS.

This sequence belongs to the WD repeat TRM82 family. In terms of assembly, non-catalytic component of the METTL1-WDR4 complex, composed of METTL1 and WDR4. Interacts with FEN1; the interaction is direct.

It localises to the nucleus. It is found in the chromosome. The protein operates within tRNA modification; N(7)-methylguanine-tRNA biosynthesis. Non-catalytic component of the METTL1-WDR4 methyltransferase complex required for the formation of N(7)-methylguanine in a subset of RNA species, such as tRNAs, mRNAs and microRNAs (miRNAs). In the METTL1-WDR4 methyltransferase complex, WDR4 acts as a scaffold for tRNA-binding. Required for the formation of N(7)-methylguanine at position 46 (m7G46) in a large subset of tRNAs that contain the 5'-RAGGU-3' motif within the variable loop. M7G46 interacts with C13-G22 in the D-loop to stabilize tRNA tertiary structure and protect tRNAs from decay. Also required for the formation of N(7)-methylguanine at internal sites in a subset of mRNAs. Also required for methylation of a specific subset of miRNAs, such as let-7. Independently of METTL1, also plays a role in genome stability: localizes at the DNA replication site and regulates endonucleolytic activities of FEN1. The sequence is that of tRNA (guanine-N(7)-)-methyltransferase non-catalytic subunit WDR4 from Bos taurus (Bovine).